The sequence spans 336 residues: Holliday junction branch migration complex subunit RuvB (336 aa).

Residues 1 to 183 (MATERLVAGN…FGINSRLEFY (183 aa)) form a large ATPase domain (RuvB-L) region. ATP-binding positions include Leu-22, Arg-23, Gly-64, Lys-67, Thr-68, Thr-69, 130–132 (EDF), Arg-173, Tyr-183, and Arg-220. Thr-68 contacts Mg(2+). A small ATPAse domain (RuvB-S) region spans residues 184–254 (QVAELEEIIR…VAREALELLQ (71 aa)). The head domain (RuvB-H) stretch occupies residues 257–336 (AAGLDSSDRR…LGIKPEDRLF (80 aa)). Residues Arg-312 and Arg-317 each coordinate DNA.

Belongs to the RuvB family. Homohexamer. Forms an RuvA(8)-RuvB(12)-Holliday junction (HJ) complex. HJ DNA is sandwiched between 2 RuvA tetramers; dsDNA enters through RuvA and exits via RuvB. An RuvB hexamer assembles on each DNA strand where it exits the tetramer. Each RuvB hexamer is contacted by two RuvA subunits (via domain III) on 2 adjacent RuvB subunits; this complex drives branch migration. In the full resolvosome a probable DNA-RuvA(4)-RuvB(12)-RuvC(2) complex forms which resolves the HJ.

The protein localises to the cytoplasm. It catalyses the reaction ATP + H2O = ADP + phosphate + H(+). The RuvA-RuvB-RuvC complex processes Holliday junction (HJ) DNA during genetic recombination and DNA repair, while the RuvA-RuvB complex plays an important role in the rescue of blocked DNA replication forks via replication fork reversal (RFR). RuvA specifically binds to HJ cruciform DNA, conferring on it an open structure. The RuvB hexamer acts as an ATP-dependent pump, pulling dsDNA into and through the RuvAB complex. RuvB forms 2 homohexamers on either side of HJ DNA bound by 1 or 2 RuvA tetramers; 4 subunits per hexamer contact DNA at a time. Coordinated motions by a converter formed by DNA-disengaged RuvB subunits stimulates ATP hydrolysis and nucleotide exchange. Immobilization of the converter enables RuvB to convert the ATP-contained energy into a lever motion, pulling 2 nucleotides of DNA out of the RuvA tetramer per ATP hydrolyzed, thus driving DNA branch migration. The RuvB motors rotate together with the DNA substrate, which together with the progressing nucleotide cycle form the mechanistic basis for DNA recombination by continuous HJ branch migration. Branch migration allows RuvC to scan DNA until it finds its consensus sequence, where it cleaves and resolves cruciform DNA. The polypeptide is Holliday junction branch migration complex subunit RuvB (Moorella thermoacetica (strain ATCC 39073 / JCM 9320)).